The chain runs to 69 residues: Toxin Tma2 (69 aa).

Residues 2 to 66 enclose the LCN-type CS-alpha/beta domain; that stretch reads KDDYPVDTAE…SPTKTSKRCN (65 aa). 4 cysteine pairs are disulfide-bonded: Cys14/Cys65, Cys18/Cys41, Cys27/Cys48, and Cys31/Cys50.

This sequence belongs to the long (4 C-C) scorpion toxin superfamily. Sodium channel inhibitor family. As to expression, expressed by the venom gland.

The protein resides in the secreted. Functionally, inhibits voltage-gated sodium channels (Nav). This toxin shows insect lethality against crickets. This Tityus macrochirus (Scorpion) protein is Toxin Tma2.